A 705-amino-acid chain; its full sequence is Probable iron-sulfur-binding oxidoreductase FadF (705 aa).

6 helical membrane-spanning segments follow: residues 4–24 (FLIA…YLFV), 71–91 (IIHV…IDFI), 109–129 (AFTF…GWAF), 146–166 (AGLV…GNGM), 173–193 (HGLS…SGVG), and 199–219 (VIFY…LVYV). 2 consecutive 4Fe-4S ferredoxin-type domains span residues 268 to 298 (QSQL…MLSP) and 360 to 391 (GDVI…VDKI). [4Fe-4S] cluster is bound by residues Cys277, Cys280, Cys283, Cys287, Cys371, Cys374, Cys377, and Cys381.

The cofactor is [4Fe-4S] cluster.

Its subcellular location is the cell membrane. In Bacillus subtilis (strain 168), this protein is Probable iron-sulfur-binding oxidoreductase FadF (fadF).